The sequence spans 129 residues: Phosphoribosyl-AMP cyclohydrolase (129 aa).

Asp-77 provides a ligand contact to Mg(2+). Cys-78 provides a ligand contact to Zn(2+). Mg(2+) contacts are provided by Asp-79 and Asp-81. Positions 94 and 101 each coordinate Zn(2+).

Belongs to the PRA-CH family. In terms of assembly, homodimer. It depends on Mg(2+) as a cofactor. The cofactor is Zn(2+).

Its subcellular location is the cytoplasm. The catalysed reaction is 1-(5-phospho-beta-D-ribosyl)-5'-AMP + H2O = 1-(5-phospho-beta-D-ribosyl)-5-[(5-phospho-beta-D-ribosylamino)methylideneamino]imidazole-4-carboxamide. The protein operates within amino-acid biosynthesis; L-histidine biosynthesis; L-histidine from 5-phospho-alpha-D-ribose 1-diphosphate: step 3/9. In terms of biological role, catalyzes the hydrolysis of the adenine ring of phosphoribosyl-AMP. This is Phosphoribosyl-AMP cyclohydrolase from Pelotomaculum thermopropionicum (strain DSM 13744 / JCM 10971 / SI).